The following is a 344-amino-acid chain: Beta-1,4-galactosyltransferase 4 (344 aa).

Topologically, residues 1 to 12 (MGCNPPYLLSYR) are cytoplasmic. A helical; Signal-anchor for type II membrane protein membrane pass occupies residues 13-38 (LRLLLLFTLCLTVLGWATSNYFVGAI). Topologically, residues 39–344 (QVIPRAKNFM…NITVDFWTAA (306 aa)) are lumenal. A disulfide bridge links C77 with C118. UDP-alpha-D-galactose is bound by residues 129 to 133 (PHRNR), 168 to 170 (FNR), and 195 to 196 (VD). The cysteines at positions 189 and 208 are disulfide-linked. D196 provides a ligand contact to Mn(2+). N220 carries N-linked (GlcNAc...) asparagine glycosylation. Y224 and W256 together coordinate UDP-alpha-D-galactose. 258–261 (GEDD) serves as a coordination point for N-acetyl-D-glucosamine. Residue H289 participates in Mn(2+) binding. Residue 289-291 (HTR) participates in UDP-alpha-D-galactose binding. An N-acetyl-D-glucosamine-binding site is contributed by R301. N335 carries an N-linked (GlcNAc...) asparagine glycan.

Belongs to the glycosyltransferase 7 family. In terms of assembly, interacts with SLC35A2/UGT1. The cofactor is Mn(2+).

It localises to the golgi apparatus membrane. Its subcellular location is the secreted. It carries out the reaction N-acetyl-D-glucosamine + UDP-alpha-D-galactose = beta-D-galactosyl-(1-&gt;4)-N-acetyl-D-glucosamine + UDP + H(+). The catalysed reaction is a beta-D-GlcNAc-(1-&gt;3)-beta-D-Gal-(1-&gt;4)-beta-D-Glc-(1&lt;-&gt;1)-Cer(d18:1(4E)) + UDP-alpha-D-galactose = a neolactoside nLc4Cer(d18:1(4E)) + UDP + H(+). It catalyses the reaction 3-O-{beta-D-galactosyl-(1-&gt;3)-[6-O-sulfo-N-acetyl-beta-D-glucosaminyl-(1-&gt;6)]-N-acetyl-alpha-D-galactosaminyl}-L-seryl-[protein] + UDP-alpha-D-galactose = 3-O-{beta-D-galactosyl-(1-&gt;3)-[beta-D-galactosyl-(1-&gt;4)-6-O-sulfo-N-acetyl-beta-D-glucosaminyl-(1-&gt;6)]-N-acetyl-alpha-D-galactosaminyl}-L-seryl-[protein] + UDP + H(+). The enzyme catalyses 3-O-{beta-D-galactosyl-(1-&gt;3)-[6-O-sulfo-N-acetyl-beta-D-glucosaminyl-(1-&gt;6)]-N-acetyl-alpha-D-galactosaminyl}-L-threonyl-[protein] + UDP-alpha-D-galactose = 3-O-{beta-D-galactosyl-(1-&gt;3)-[beta-D-galactosyl-(1-&gt;4)-6-O-sulfo-N-acetyl-beta-D-glucosaminyl-(1-&gt;6)]-N-acetyl-alpha-D-galactosaminyl}-L-threonyl-[protein] + UDP + H(+). The protein operates within protein modification; protein glycosylation. Its pathway is glycolipid biosynthesis. Functionally, galactose (Gal) transferase involved in the synthesis of terminal N-acetyllactosamine (LacNac) unit present on glycan chains of glycoproteins and glycosphingolipids. Catalyzes the transfer of Gal residue via a beta1-&gt;4 linkage from UDP-Gal to the non-reducing terminal N-acetyl glucosamine 6-O-sulfate (6-O-sulfoGlcNAc) in the linearly growing chain of both N- and O-linked keratan sulfate proteoglycans. Cooperates with B3GNT7 N-acetyl glucosamine transferase and CHST6 and CHST1 sulfotransferases to construct and elongate mono- and disulfated disaccharide units [-&gt;3Galbeta1-&gt;4(6-sulfoGlcNAcbeta)1-&gt;] and [-&gt;3(6-sulfoGalbeta)1-&gt;4(6-sulfoGlcNAcbeta)1-&gt;] within keratan sulfate polymer. Transfers Gal residue via a beta1-&gt;4 linkage to terminal 6-O-sulfoGlcNAc within the LacNac unit of core 2 O-glycans forming 6-sulfo-sialyl-Lewis X (sLex). May contribute to the generation of sLex epitope on mucin-type glycoproteins that serve as ligands for SELL/L-selectin, a major regulator of leukocyte migration. In the biosynthesis pathway of neolacto-series glycosphingolipids, transfers Gal residue via a beta1-&gt;4 linkage to terminal GlcNAc of a lactotriaosylceramide (Lc3Cer) acceptor to form a neolactotetraosylceramide. The protein is Beta-1,4-galactosyltransferase 4 (B4galt4) of Rattus norvegicus (Rat).